The sequence spans 199 residues: Secreted chorismate mutase (199 aa).

Residues 1–33 (MLTRPREIYLATAVSIGILLSLIAPLGPPLARA) form the signal peptide. Positions 34–113 (DGTSQLAELV…ATEAIEYSRF (80 aa)) constitute a Chorismate mutase domain. Substrate-binding positions include R49, K60, D69, 72-76 (RVEQQ), 105-109 (TEAIE), and R134. An intrachain disulfide couples C160 to C193.

In terms of assembly, homodimer.

It is found in the secreted. It catalyses the reaction chorismate = prephenate. The protein operates within metabolic intermediate biosynthesis; prephenate biosynthesis; prephenate from chorismate: step 1/1. Its activity is regulated as follows. Tyrosine, phenylalanine, and tryptophan moderately enhance chorismate mutase activity at low concentrations, but allosterically inhibit the enzyme at higher concentrations. Its function is as follows. Catalyzes the Claisen rearrangement of chorismate to prephenate. May play some role in the pathogenicity. The chain is Secreted chorismate mutase from Mycobacterium tuberculosis (strain ATCC 25618 / H37Rv).